The following is a 153-amino-acid chain: MTEVIAYLIEHFQDFDTCPPPEDLGMLLEEAGFDTMEIGNTLMMMEVLLNSSEFSAEPAGSGALRVYSKEETDNLPQEVMGLMQYLIEEKAVSCEQREIIIHALMHIPGDEITVDTAKVLTLLLLWANKSELPVLVGDELMSALLLDNKPTMN.

This sequence belongs to the Smg family.

The polypeptide is Protein Smg homolog (Neisseria gonorrhoeae (strain ATCC 700825 / FA 1090)).